A 358-amino-acid polypeptide reads, in one-letter code: GTPase Obg (358 aa).

The 158-residue stretch at 1-158 (MFVDNVDIYV…RHVRLELKLI (158 aa)) folds into the Obg domain. In terms of domain architecture, OBG-type G spans 159–355 (ADVGLVGFPN…LKYLLHESVR (197 aa)). GTP is bound by residues 165 to 172 (GFPNVGKS), 190 to 194 (FTTLI), 212 to 215 (DIPG), 280 to 283 (SKVD), and 336 to 338 (SSA). Residues Ser172 and Thr192 each contribute to the Mg(2+) site.

This sequence belongs to the TRAFAC class OBG-HflX-like GTPase superfamily. OBG GTPase family. As to quaternary structure, monomer. Mg(2+) is required as a cofactor.

Its subcellular location is the cytoplasm. Its function is as follows. An essential GTPase which binds GTP, GDP and possibly (p)ppGpp with moderate affinity, with high nucleotide exchange rates and a fairly low GTP hydrolysis rate. Plays a role in control of the cell cycle, stress response, ribosome biogenesis and in those bacteria that undergo differentiation, in morphogenesis control. The polypeptide is GTPase Obg (Wolinella succinogenes (strain ATCC 29543 / DSM 1740 / CCUG 13145 / JCM 31913 / LMG 7466 / NCTC 11488 / FDC 602W) (Vibrio succinogenes)).